A 537-amino-acid chain; its full sequence is Tyrosine-protein kinase Fyn (537 aa).

Gly2 is lipidated: N-myristoyl glycine. 2 S-palmitoyl cysteine lipidation sites follow: Cys3 and Cys6. Thr12 is modified (phosphothreonine; by PKC). The SH3 domain occupies 82–143; sequence TGVTLFVALY…PSNYVAPVDS (62 aa). The 98-residue stretch at 149–246 folds into the SH2 domain; the sequence is WYFGKLGRKD…GLCCRLVVPC (98 aa). Residues 271–524 enclose the Protein kinase domain; that stretch reads LQLIKRLGNG…YLQGFLEDYF (254 aa). ATP is bound by residues 277-285 and Lys299; that span reads LGNGQFGEV. Catalysis depends on Asp390, which acts as the Proton acceptor. Tyr420 is modified (phosphotyrosine; by autocatalysis). Tyr531 carries the phosphotyrosine modification.

This sequence belongs to the protein kinase superfamily. Tyr protein kinase family. SRC subfamily. Associates through its SH3 domain, to the p85 subunit of phosphatidylinositol 3-kinase. Mn(2+) is required as a cofactor.

It carries out the reaction L-tyrosyl-[protein] + ATP = O-phospho-L-tyrosyl-[protein] + ADP + H(+). With respect to regulation, inhibited by phosphorylation of Tyr-531 by leukocyte common antigen and activated by dephosphorylation of this site. Tyrosine-protein kinase implicated in the control of cell growth. Plays a role in the regulation of intracellular calcium levels. Required in brain development and mature brain function with important roles in the regulation of axon growth, axon guidance, and neurite extension. Blocks axon outgrowth and attraction induced by ntn1 by phosphorylating its receptor ddc. The sequence is that of Tyrosine-protein kinase Fyn (fyn) from Xenopus laevis (African clawed frog).